The following is a 161-amino-acid chain: GTP-dependent dephospho-CoA kinase (161 aa).

5 residues coordinate GTP: D40, V41, V42, D59, and E112.

Belongs to the GTP-dependent DPCK family.

It carries out the reaction 3'-dephospho-CoA + GTP = GDP + CoA + H(+). It functions in the pathway cofactor biosynthesis; coenzyme A biosynthesis. Catalyzes the GTP-dependent phosphorylation of the 3'-hydroxyl group of dephosphocoenzyme A to form coenzyme A (CoA). This chain is GTP-dependent dephospho-CoA kinase, found in Methanoculleus marisnigri (strain ATCC 35101 / DSM 1498 / JR1).